The following is a 198-amino-acid chain: Prostamide/prostaglandin F synthase (198 aa).

Position 108 is a phosphotyrosine (Y108).

It belongs to the peroxiredoxin-like PRXL2 family. Prostamide/prostaglandin F synthase subfamily.

It localises to the cytoplasm. It is found in the cytosol. It catalyses the reaction prostaglandin H2 + [thioredoxin]-dithiol = prostaglandin F2alpha + [thioredoxin]-disulfide. The catalysed reaction is prostamide F2alpha + [thioredoxin]-disulfide = prostamide H2 + [thioredoxin]-dithiol. Catalyzes the reduction of prostaglandin-ethanolamide H(2) (prostamide H(2)) to prostamide F(2alpha) with NADPH as proton donor. Also able to reduce prostaglandin H(2) to prostaglandin F(2alpha). This is Prostamide/prostaglandin F synthase from Homo sapiens (Human).